The following is a 1058-amino-acid chain: MRRKGRCHRGSAARHPSSPCSIKHSPTRETLTYAQAQRMVEIEIEGRLHRISIFDPLEIILEDDLTAQEMSECNSNKENSERPPVCLRTKRHKNNRVKKKNEVLPSTHGTPASASALPEPKVRIVEYSPPSAPRRPPVYYKFIEKSAEELDNEVEYDMDEEDYAWLEIINEKRKGDCVSAVSQNMFEFLMDRFEKESYCENQKQGEQQSLIDEDAVCCICMDGECQNSNVILFCDMCNLAVHQECYGVPYIPEGQWLCRHCLQSRARPADCVLCPNKGGAFKKTDDDRWGHVVCALWIPEVGFANTVFIEPIDGVRNIPPARWKLTCYLCKQKGVGACIQCHKANCYTAFHVTCAQKAGLYMKMEPVKELTGGSATFSVRKTAYCDVHTPPGCTRRPLNIYGDVEMKNGVCRKESSVKTVRSTSKVRKKAKKAKKTLAEPCAVLPTVCAPYIPPQRLNRIANQVAIQRKKQFVERAHSYWLLKRLSRNGAPLLRRLQSSLQSQRNTQQRENDEEMKAAKEKLKYWQRLRHDLERARLLIELLRKREKLKREQVKVEQMAMELRLTPLTVLLRSVLEQLQEKDPAKIFAQPVSLKEVPDYLDHIKHPMDFATMRKRLEAQGYKNLHAFEEDFNLIVDNCMKYNAKDTVFYRAAVRLRDQGGVVLRQARREVESIGLEEASGMHLPERPIAAPRRPFSWEEVDRLLDPANRAHMSLEEQLRELLDKLDLTCSMKSSGSRSKRAKLLKKEIALLRNKLSQQHSQAPPTGAGTGGFEDEAAPLAPDTAEEVLPRLETLLQPRKRSRSTCGDSEVEEESPGKRLDTGLTNGFGGARSEQEPGGGPGRKAAPRRRCASESSICSSNSPLCDSSFSTPKCGRGKPALVRRHTLEDRSELISCIENGNYAKAARIAAEVGQSNMWISTDAAASVLEPLKVVWAKCSGYPSYPALIIDPKMPRVPGHHNGVTIPAPPLDVLKIGEHMQTKSEEKLFLVLFFDNKRSWQWLPKSKMVPLGVDETIDKLKMMEGRNSSIRKAVRIAFDRAMNHLSRVHGEPASDLSDID.

The segment covering 1 to 12 has biased composition (basic residues); it reads MRRKGRCHRGSA. The tract at residues 1–25 is disordered; sequence MRRKGRCHRGSAARHPSSPCSIKHS. An interaction with KAT7/HBO1 and histones region spans residues 31-80; sequence LTYAQAQRMVEIEIEGRLHRISIFDPLEIILEDDLTAQEMSECNSNKENS. The residue at position 128 (S128) is a Phosphoserine. Residues 214–264 form a PHD-type 1 zinc finger; that stretch reads DAVCCICMDGECQNSNVILFCDMCNLAVHQECYGVPYIPEGQWLCRHCLQS. The C2HC pre-PHD-type zinc-finger motif lies at 268–301; it reads PADCVLCPNKGGAFKKTDDDRWGHVVCALWIPEV. The segment at 325–389 adopts a PHD-type 2 zinc-finger fold; the sequence is LTCYLCKQKG…RKTAYCDVHT (65 aa). N6-acetyllysine is present on residues K368, K516, and K519. Glycyl lysine isopeptide (Lys-Gly) (interchain with G-Cter in SUMO2) cross-links involve residues K554 and K594. In terms of domain architecture, Bromo spans 562-666; it reads LRLTPLTVLL…DQGGVVLRQA (105 aa). A compositionally biased stretch (polar residues) spans 754–763; it reads KLSQQHSQAP. Disordered regions lie at residues 754–776 and 791–847; these read KLSQQHSQAPPTGAGTGGFEDEA and LETL…AAPR. S803 is modified (phosphoserine). K903 carries the post-translational modification N6-acetyllysine. The PWWP domain maps to 929–1012; that stretch reads PLKVVWAKCS…KSKMVPLGVD (84 aa). A phosphoserine mark is found at S1052 and S1055.

As to quaternary structure, component of some HBO1 complexes composed of KAT7/HBO1, MEAF6, ING4 and BRD1/BRPF2. Component of the MOZ/MORF complex composed at least of ING5, KAT6A, KAT6B, MEAF6 and one of BRPF1, BRD1/BRPF2 and BRPF3. Interacts (via PHD-type zinc finger domain) with unmodified histone H3. Interacts (via PWWP domain) with dimethylated and trimethylated 'Lys-79' on histone H3.

The protein resides in the nucleus. It localises to the chromosome. Scaffold subunit of various histone acetyltransferase (HAT) complexes, such as the MOZ/MORF and HBO1 complexes, that acts as a regulator of hematopoiesis. Plays a key role in HBO1 complex by directing KAT7/HBO1 specificity towards histone H3 'Lys-14' acetylation (H3K14ac), thereby promoting erythroid differentiation. This chain is Bromodomain-containing protein 1, found in Mus musculus (Mouse).